The primary structure comprises 338 residues: UPF0252 protein PF1496 (338 aa).

A helical membrane pass occupies residues 100 to 120 (ILSMLFLVFILFPAFTSHIWS).

The protein belongs to the UPF0252 family.

Its subcellular location is the membrane. This Pyrococcus furiosus (strain ATCC 43587 / DSM 3638 / JCM 8422 / Vc1) protein is UPF0252 protein PF1496.